Here is a 172-residue protein sequence, read N- to C-terminus: Centrin-2 (172 aa).

Residues 1–30 (MASNFKKANMASSSQRKRMSPKPELTEEQK) are disordered. Alanine 2 carries the post-translational modification N-acetylalanine. The segment at 2-25 (ASNFKKANMASSSQRKRMSPKPEL) is required for self-assembly. The residue at position 20 (serine 20) is a Phosphoserine. Lysine 22 is covalently cross-linked (Glycyl lysine isopeptide (Lys-Gly) (interchain with G-Cter in SUMO2)). Threonine 26 is subject to Phosphothreonine. EF-hand domains lie at 28 to 63 (EQKQ…LGFE), 64 to 99 (PKKE…KMSE), 101 to 136 (DTKE…LGEN), and 137 to 172 (LTDE…TSLY). Ca(2+) is bound by residues aspartate 41, aspartate 43, threonine 45, threonine 47, and glutamate 52. Residues aspartate 150, aspartate 152, aspartate 154, glutamate 156, and glutamate 161 each coordinate Ca(2+).

It belongs to the centrin family. Monomer. Homooligomer. Interacts with SFI1. Interacts with CCP110. Component of the XPC complex composed of XPC, RAD23B and CETN2. Component of the nuclear pore complex (NPC)-associated TREX-2 complex (transcription and export complex 2), composed of at least GANP, 2 copies of ENY2, PCID2, SEM1/DSS1, and either centrin CETN2 or centrin CETN3. The TREX-2 complex also associates with ALYREF/ALY and with the nucleoporin NUP153. Interacts with USP49. Forms a microtubule-associated complex with POC5, POC1B and FAM161A. Interacts with CCDC15.

It is found in the cytoplasm. Its subcellular location is the cytoskeleton. It localises to the microtubule organizing center. The protein localises to the centrosome. The protein resides in the centriole. It is found in the nucleus envelope. Its subcellular location is the nucleus. It localises to the nuclear pore complex. Functionally, plays a fundamental role in microtubule organizing center structure and function. Required for centriole duplication and correct spindle formation. Has a role in regulating cytokinesis and genome stability via cooperation with CALM1 and CCP110. Involved in global genome nucleotide excision repair (GG-NER) by acting as component of the XPC complex. Cooperatively with RAD23B appears to stabilize XPC. In vitro, stimulates DNA binding of the XPC:RAD23B dimer. In terms of biological role, the XPC complex is proposed to represent the first factor bound at the sites of DNA damage and together with other core recognition factors, XPA, RPA and the TFIIH complex, is part of the pre-incision (or initial recognition) complex. The XPC complex recognizes a wide spectrum of damaged DNA characterized by distortions of the DNA helix such as single-stranded loops, mismatched bubbles or single-stranded overhangs. The orientation of XPC complex binding appears to be crucial for inducing a productive NER. XPC complex is proposed to recognize and to interact with unpaired bases on the undamaged DNA strand which is followed by recruitment of the TFIIH complex and subsequent scanning for lesions in the opposite strand in a 5'-to-3' direction by the NER machinery. Cyclobutane pyrimidine dimers (CPDs) which are formed upon UV-induced DNA damage esacpe detection by the XPC complex due to a low degree of structural perurbation. Instead they are detected by the UV-DDB complex which in turn recruits and cooperates with the XPC complex in the respective DNA repair. Its function is as follows. As a component of the TREX-2 complex, involved in the export of mRNAs to the cytoplasm through the nuclear pores. The protein is Centrin-2 (CETN2) of Homo sapiens (Human).